Consider the following 365-residue polypeptide: Geissoschizine synthase (365 aa).

Cys-51 contributes to the Zn(2+) binding site. Residue Asn-52 participates in NADP(+) binding. His-73, Glu-74, Cys-104, Cys-107, Cys-110, Cys-118, and Cys-169 together coordinate Zn(2+). NADP(+)-binding residues include Leu-195, Gly-197, Leu-198, Ser-217, Thr-218, Ser-219, Lys-222, Arg-262, Val-281, Ala-283, Ser-305, Thr-307, and Arg-352.

Belongs to the zinc-containing alcohol dehydrogenase family. Class-III subfamily. Homodimer. Zn(2+) serves as cofactor. Mainly expressed in roots and, to a lower level, in leaves.

It catalyses the reaction (19E)-geissoschizine + NADP(+) = 4,21-dehydrogeissoschizine + NADPH. Its pathway is alkaloid biosynthesis; ajmaline biosynthesis. Alcohol dehydrogenase involved in the biosynthesis of ajmaline-type monoterpenoid indole alkaloids (MIAs) natural products, important plant-derived pharmaceuticals used in the therapy of heart disorders. Catalyzes iminium reduction on 4,21-dehydrogeissoschizine to produce 19E-geissoschizine, precursor of vomilenine, an intermediate chemical in the biosynthesis of ajmaline. The polypeptide is Geissoschizine synthase (Rauvolfia serpentina (Serpentine wood)).